The following is a 133-amino-acid chain: Fluoride-specific ion channel FluC 4 (133 aa).

3 consecutive transmembrane segments (helical) span residues 7-27 (ILVL…SGYV), 37-57 (WGTF…AGLG), and 60-80 (LGGI…LLGG). The Na(+) site is built by G79 and T82. Residues 107 to 127 (IVASALLCVLAVAAGYGGIMW) form a helical membrane-spanning segment.

Belongs to the fluoride channel Fluc/FEX (TC 1.A.43) family.

It localises to the cell inner membrane. It carries out the reaction fluoride(in) = fluoride(out). Its activity is regulated as follows. Na(+) is not transported, but it plays an essential structural role and its presence is essential for fluoride channel function. Fluoride-specific ion channel. Important for reducing fluoride concentration in the cell, thus reducing its toxicity. This is Fluoride-specific ion channel FluC 4 from Brucella abortus biovar 1 (strain 9-941).